An 87-amino-acid chain; its full sequence is Small ribosomal subunit protein bS20 (87 aa).

The disordered stretch occupies residues 1–26; the sequence is MANIKSAKKRAVQSEKARKHNASRRS.

It belongs to the bacterial ribosomal protein bS20 family.

Its function is as follows. Binds directly to 16S ribosomal RNA. This is Small ribosomal subunit protein bS20 from Salmonella gallinarum (strain 287/91 / NCTC 13346).